Reading from the N-terminus, the 578-residue chain is DNA polymerase III subunit gamma/tau (578 aa).

42-49 (GPRGCGKT) is a binding site for ATP. The Zn(2+) site is built by Cys-61, Cys-70, Cys-73, and Cys-76. Disordered stretches follow at residues 389–423 (APQA…ASSE) and 525–559 (AVNP…RDPE). 2 stretches are compositionally biased toward basic and acidic residues: residues 402 to 412 (EPKHQPAREPR) and 536 to 559 (QRDE…RDPE).

This sequence belongs to the DnaX/STICHEL family. As to quaternary structure, DNA polymerase III contains a core (composed of alpha, epsilon and theta chains) that associates with a tau subunit. This core dimerizes to form the POLIII' complex. PolIII' associates with the gamma complex (composed of gamma, delta, delta', psi and chi chains) and with the beta chain to form the complete DNA polymerase III complex.

The catalysed reaction is DNA(n) + a 2'-deoxyribonucleoside 5'-triphosphate = DNA(n+1) + diphosphate. Functionally, DNA polymerase III is a complex, multichain enzyme responsible for most of the replicative synthesis in bacteria. This DNA polymerase also exhibits 3' to 5' exonuclease activity. In Mycobacterium bovis (strain ATCC BAA-935 / AF2122/97), this protein is DNA polymerase III subunit gamma/tau (dnaX).